Here is a 354-residue protein sequence, read N- to C-terminus: Guanine nucleotide-binding protein G(i) subunit alpha-3 (354 aa).

The N-myristoyl glycine moiety is linked to residue Gly2. Cys3 carries the S-palmitoyl cysteine lipid modification. Residues 32–354 (KEVKLLLLGA…KNNLKECGLY (323 aa)) form the G-alpha domain. The tract at residues 35–48 (KLLLLGAGESGKST) is G1 motif. Positions 42, 43, 44, 45, 46, 47, 48, 150, 151, 175, 176, 177, 178, 179, 180, 181, 201, and 203 each coordinate GTP. Glu43, Ser44, Gly45, Lys46, Ser47, and Thr48 together coordinate GDP. Ser47 contacts Mg(2+). Residues Ser151, Leu175, Arg176, Thr177, and Arg178 each coordinate GDP. Residues 173-181 (DVLRTRVKT) form a G2 motif region. Arg178 bears the ADP-ribosylarginine; by cholera toxin mark. Thr181 is a Mg(2+) binding site. Positions 196-205 (FKMFDVGGQR) are G3 motif. Gln204 carries the post-translational modification Deamidated glutamine; by Photorhabdus PAU_02230. A G4 motif region spans residues 265-272 (ILFLNKKD). Asn269, Lys270, Asp272, Leu273, Cys325, Ala326, and Thr327 together coordinate GTP. GDP-binding residues include Asn269, Lys270, and Asp272. The tract at residues 324-329 (TCATDT) is G5 motif. Cys325 and Ala326 together coordinate GDP. Cys351 carries the ADP-ribosylcysteine; by pertussis toxin modification.

Belongs to the G-alpha family. G(i/o/t/z) subfamily. In terms of assembly, heterotrimeric G proteins are composed of 3 units; alpha, beta and gamma. The alpha subunit contains the guanine nucleotide binding site. GTP binding causes dissociation of the heterotrimer, liberating the individual subunits so that they can interact with downstream effector proteins. Forms a complex with CCDC88A/GIV and EGFR which leads to enhanced EGFR signaling and triggering of cell migration; ligand stimulation is required for recruitment of GNAI3 to the complex. Interacts (inactive GDP-bound form) with CCDC88A/GIV (via GBA motif); the interaction leads to activation of GNAI3. Interacts (inactive GDP-bound form) with CCDC88C/DAPLE (via GBA motif); the interaction leads to activation of GNAI3. Interacts (inactive GDP-bound form) with NUCB1 (via GBA motif) and NUCB2 (via GBA motif); the interaction leads to activation of GNAI3. Interacts (inactive GDP-bound form) with PLCD4 (via GBA motif); the interaction leads to activation of GNAI3. Interacts with INSR; the interaction is probably mediated by CCDC88A/GIV. Interacts with GPSM1. Interacts (GDP-bound form) with GPSM2 (via GoLoco domains). Does not interact with RGS2. Interacts with RGS8 and RGS10; this strongly enhances the intrinsic GTPase activity. Interacts with RGS16; this strongly enhances the intrinsic GTPase activity. Interacts with RGS12. Interacts (via active GTP- or inactive GDP-bound form) with RGS14. Interacts (via active GTP-bound form) with TRPC5 (via ANK repeats) in a homotetrameric ion channel; the interaction is direct and activates the channel activity. (Microbial infection) Deamidated at Gln-204 by Photorhabdus asymbiotica toxin PAU_02230, blocking GTP hydrolysis of heterotrimeric GNAQ or GNA11 and G-alphai (GNAI1, GNAI2 or GNAI3) proteins, thereby activating RhoA.

The protein localises to the cytoplasm. Its subcellular location is the cell membrane. The protein resides in the cytoskeleton. It is found in the microtubule organizing center. It localises to the centrosome. In terms of biological role, heterotrimeric guanine nucleotide-binding proteins (G proteins) function as transducers downstream of G protein-coupled receptors (GPCRs) in numerous signaling cascades. The alpha chain contains the guanine nucleotide binding site and alternates between an active, GTP-bound state and an inactive, GDP-bound state. Signaling by an activated GPCR promotes GDP release and GTP binding. The alpha subunit has a low GTPase activity that converts bound GTP to GDP, thereby terminating the signal. Both GDP release and GTP hydrolysis are modulated by numerous regulatory proteins. Signaling is mediated via effector proteins, such as adenylate cyclase. Inhibits adenylate cyclase activity, leading to decreased intracellular cAMP levels. Stimulates the activity of receptor-regulated K(+) channels. The active GTP-bound form prevents the association of RGS14 with centrosomes and is required for the translocation of RGS14 from the cytoplasm to the plasma membrane. May play a role in cell division. The active GTP-bound form activates the calcium permeant TRPC5 ion channels. The polypeptide is Guanine nucleotide-binding protein G(i) subunit alpha-3 (GNAI3) (Homo sapiens (Human)).